Here is a 618-residue protein sequence, read N- to C-terminus: COMPASS component cclA (618 aa).

The disordered stretch occupies residues 1-91 (MSSIQPVGSS…KKAAVAPNSA (91 aa)). 2 stretches are compositionally biased toward low complexity: residues 8-19 (GSSGPSSNINSP) and 37-49 (NARSSPAPPSNAS). Positions 57-69 (SKRNKRDSRKKRE) are enriched in basic residues. Residues 157 to 368 (IADPGFPHIK…QSNVFSTKHL (212 aa)) form the B30.2/SPRY domain. The tract at residues 588-618 (TLSVGHEGSPNPATPSAPLENTVPTEDVEMS) is disordered.

The protein belongs to the cclA family. Component of the COMPASS complex.

The protein localises to the nucleus. The protein resides in the chromosome. Its subcellular location is the telomere. In terms of biological role, component of the COMPASS (Set1C) complex that specifically mono-, di- and trimethylates histone H3 to form H3K4me1/2/3, which subsequently plays a role in telomere length maintenance and transcription elongation regulation. Controls the production of several secondary metabolites, including gliotoxin, but does not contribute to pathogenicity. This is COMPASS component cclA from Aspergillus fumigatus (strain ATCC MYA-4609 / CBS 101355 / FGSC A1100 / Af293) (Neosartorya fumigata).